A 245-amino-acid chain; its full sequence is Eukaryotic translation initiation factor 3 subunit K (245 aa).

The 182-residue stretch at 46–227 (YDCYANLALL…EAKGTVVREN (182 aa)) folds into the PCI domain.

It belongs to the eIF-3 subunit K family. Component of the eukaryotic translation initiation factor 3 (eIF-3) complex.

It is found in the cytoplasm. Its function is as follows. Component of the eukaryotic translation initiation factor 3 (eIF-3) complex, which is involved in protein synthesis of a specialized repertoire of mRNAs and, together with other initiation factors, stimulates binding of mRNA and methionyl-tRNAi to the 40S ribosome. The eIF-3 complex specifically targets and initiates translation of a subset of mRNAs involved in cell proliferation. The polypeptide is Eukaryotic translation initiation factor 3 subunit K (Botryotinia fuckeliana (strain B05.10) (Noble rot fungus)).